We begin with the raw amino-acid sequence, 170 residues long: Probable calcium-binding protein CML29 (170 aa).

EF-hand domains lie at Ser27 to Asp62, Lys63 to Gly98, and Ala138 to Leu170. 13 residues coordinate Ca(2+): Asp40, Asp42, Asp44, Glu51, Asp76, Asp78, Asp80, Lys82, Glu87, Asp151, Asp153, Asp155, and Glu162.

Functionally, potential calcium sensor. The protein is Probable calcium-binding protein CML29 (CML29) of Oryza sativa subsp. japonica (Rice).